Reading from the N-terminus, the 141-residue chain is Large ribosomal subunit protein uL14 (141 aa).

Belongs to the universal ribosomal protein uL14 family. In terms of assembly, part of the 50S ribosomal subunit. Forms a cluster with proteins L3 and L24e, part of which may contact the 16S rRNA in 2 intersubunit bridges.

Binds to 23S rRNA. Forms part of two intersubunit bridges in the 70S ribosome. This chain is Large ribosomal subunit protein uL14, found in Pyrococcus horikoshii (strain ATCC 700860 / DSM 12428 / JCM 9974 / NBRC 100139 / OT-3).